We begin with the raw amino-acid sequence, 95 residues long: Large ribosomal subunit protein bL25 (95 aa).

It belongs to the bacterial ribosomal protein bL25 family. As to quaternary structure, part of the 50S ribosomal subunit; part of the 5S rRNA/L5/L18/L25 subcomplex. Contacts the 5S rRNA. Binds to the 5S rRNA independently of L5 and L18.

In terms of biological role, this is one of the proteins that binds to the 5S RNA in the ribosome where it forms part of the central protuberance. The protein is Large ribosomal subunit protein bL25 of Actinobacillus pleuropneumoniae serotype 5b (strain L20).